A 156-amino-acid polypeptide reads, in one-letter code: Small ribosomal subunit protein uS7 (156 aa).

The protein belongs to the universal ribosomal protein uS7 family. As to quaternary structure, part of the 30S ribosomal subunit. Contacts proteins S9 and S11.

Its function is as follows. One of the primary rRNA binding proteins, it binds directly to 16S rRNA where it nucleates assembly of the head domain of the 30S subunit. Is located at the subunit interface close to the decoding center, probably blocks exit of the E-site tRNA. The protein is Small ribosomal subunit protein uS7 of Afipia carboxidovorans (strain ATCC 49405 / DSM 1227 / KCTC 32145 / OM5) (Oligotropha carboxidovorans).